Here is a 239-residue protein sequence, read N- to C-terminus: Fatty acid metabolism regulator protein (239 aa).

The HTH gntR-type domain occupies 6–74; it reads QSPAGFAEEY…HGKPTKVNNF (69 aa). Residues 34–53 constitute a DNA-binding region (H-T-H motif); that stretch reads ERELSELIGVTRTTLREVLQ.

Homodimer.

The protein resides in the cytoplasm. Its function is as follows. Multifunctional regulator of fatty acid metabolism. The chain is Fatty acid metabolism regulator protein from Klebsiella pneumoniae subsp. pneumoniae (strain ATCC 700721 / MGH 78578).